The sequence spans 89 residues: Small ribosomal subunit protein uS15 (89 aa).

It belongs to the universal ribosomal protein uS15 family. In terms of assembly, part of the 30S ribosomal subunit. Forms a bridge to the 50S subunit in the 70S ribosome, contacting the 23S rRNA.

One of the primary rRNA binding proteins, it binds directly to 16S rRNA where it helps nucleate assembly of the platform of the 30S subunit by binding and bridging several RNA helices of the 16S rRNA. Functionally, forms an intersubunit bridge (bridge B4) with the 23S rRNA of the 50S subunit in the ribosome. The sequence is that of Small ribosomal subunit protein uS15 from Dinoroseobacter shibae (strain DSM 16493 / NCIMB 14021 / DFL 12).